We begin with the raw amino-acid sequence, 103 residues long: Small ribosomal subunit protein bS18c (103 aa).

This sequence belongs to the bacterial ribosomal protein bS18 family. As to quaternary structure, part of the 30S ribosomal subunit.

The protein resides in the plastid. It is found in the chloroplast. The protein is Small ribosomal subunit protein bS18c of Buxus microphylla (Littleleaf boxwood).